Here is a 185-residue protein sequence, read N- to C-terminus: Crossover junction endodeoxyribonuclease RuvC (185 aa).

Residues D7, E66, and D137 contribute to the active site. Residues D7, E66, and D137 each contribute to the Mg(2+) site.

Belongs to the RuvC family. Homodimer which binds Holliday junction (HJ) DNA. The HJ becomes 2-fold symmetrical on binding to RuvC with unstacked arms; it has a different conformation from HJ DNA in complex with RuvA. In the full resolvosome a probable DNA-RuvA(4)-RuvB(12)-RuvC(2) complex forms which resolves the HJ. Mg(2+) serves as cofactor.

The protein localises to the cytoplasm. The catalysed reaction is Endonucleolytic cleavage at a junction such as a reciprocal single-stranded crossover between two homologous DNA duplexes (Holliday junction).. Its function is as follows. The RuvA-RuvB-RuvC complex processes Holliday junction (HJ) DNA during genetic recombination and DNA repair. Endonuclease that resolves HJ intermediates. Cleaves cruciform DNA by making single-stranded nicks across the HJ at symmetrical positions within the homologous arms, yielding a 5'-phosphate and a 3'-hydroxyl group; requires a central core of homology in the junction. The consensus cleavage sequence is 5'-(A/T)TT(C/G)-3'. Cleavage occurs on the 3'-side of the TT dinucleotide at the point of strand exchange. HJ branch migration catalyzed by RuvA-RuvB allows RuvC to scan DNA until it finds its consensus sequence, where it cleaves and resolves the cruciform DNA. The polypeptide is Crossover junction endodeoxyribonuclease RuvC (Anaeromyxobacter dehalogenans (strain 2CP-C)).